Consider the following 298-residue polypeptide: Chitin deacetylase (298 aa).

Residues 1 to 16 form the signal peptide; it reads MLAPLFAALLAGAATA. In terms of domain architecture, NodB homology spans 39–222; that stretch reads NTFALTFDDG…AIKAKGLTPV (184 aa). Asp46 functions as the Proton acceptor in the catalytic mechanism. Asp46 contacts acetate. Residues Asp47, His99, and His103 each contribute to the Co(2+) site. Position 140 (Tyr140) interacts with acetate. Residue His196 is the Proton donor of the active site. The Chitin-binding type-1 domain maps to 256-298; that stretch reads DDTCGGSNGYVCQNSQCCSQWGWCGTTSEYCAAGCQAAYGPCT. 4 disulfides stabilise this stretch: Cys259–Cys273, Cys267–Cys279, Cys272–Cys286, and Cys290–Cys297.

Belongs to the polysaccharide deacetylase family. It depends on Co(2+) as a cofactor.

It is found in the secreted. It carries out the reaction [(1-&gt;4)-N-acetyl-beta-D-glucosaminyl](n) + n H2O = chitosan + n acetate. Inhibited by Fe(2+) and to a lesser extent by Mn(2+). In terms of biological role, hydrolyzes the N-acetamido groups of N-acetyl-D-glucosamine polymers in chitin to form chitosan and acetate. May play a role in evasion of the host immune response; plant chitinases liberate chitin molecules from the fungal cell wall which act as elicitors of the plant immune response, deacetylation of the liberated chitin neutralizes elicitor activity. This Pestalotiopsis sp protein is Chitin deacetylase.